The chain runs to 304 residues: NADH-cytochrome b5 reductase 2 (304 aa).

A helical membrane pass occupies residues 9-29; that stretch reads MLVALAVIGVTVLLFLIKALG. In terms of domain architecture, FAD-binding FR-type spans 43-155; that stretch reads NAKYPLPLIE…RGPNGLLVYK (113 aa). Residues 135-150 and 174-209 each bind FAD; these read DSLKIGETIDFRGPNG and VAKHVGMLAGGTGITPMLQLIRQITQDPNDNTKCSL.

Belongs to the flavoprotein pyridine nucleotide cytochrome reductase family. FAD is required as a cofactor.

The protein localises to the membrane. The catalysed reaction is 2 Fe(III)-[cytochrome b5] + NADH = 2 Fe(II)-[cytochrome b5] + NAD(+) + H(+). In terms of biological role, NADH-cytochrome b5 reductases are involved in desaturation and elongation of fatty acids, cholesterol biosynthesis and drug metabolism. The polypeptide is NADH-cytochrome b5 reductase 2 (cyb5r2) (Xenopus tropicalis (Western clawed frog)).